A 279-amino-acid chain; its full sequence is Presqualene diphosphate synthase (279 aa).

This sequence belongs to the phytoene/squalene synthase family. HpnD subfamily.

It carries out the reaction 2 (2E,6E)-farnesyl diphosphate = presqualene diphosphate + diphosphate. It participates in secondary metabolite biosynthesis; hopanoid biosynthesis. In terms of biological role, involved in the biosynthesis of the hopanoid precursor squalene (SQ) from farnesyl diphosphate (FPP). Catalyzes the first step, the formation of presqualene diphosphate (PSPP) from two molecules of FPP. The polypeptide is Presqualene diphosphate synthase (Sinorhizobium fredii (strain NBRC 101917 / NGR234)).